Reading from the N-terminus, the 165-residue chain is Ribosome maturation factor RimM (165 aa).

A PRC barrel domain is found at 94-165 (EDEFYIADLT…YVILNYQREA (72 aa)).

Belongs to the RimM family. As to quaternary structure, binds ribosomal protein uS19.

Its subcellular location is the cytoplasm. Functionally, an accessory protein needed during the final step in the assembly of 30S ribosomal subunit, possibly for assembly of the head region. Essential for efficient processing of 16S rRNA. May be needed both before and after RbfA during the maturation of 16S rRNA. It has affinity for free ribosomal 30S subunits but not for 70S ribosomes. The protein is Ribosome maturation factor RimM of Rickettsia rickettsii (strain Iowa).